The primary structure comprises 176 residues: NADH-quinone oxidoreductase subunit I (176 aa).

4Fe-4S ferredoxin-type domains lie at 47 to 77 and 87 to 116; these read LTRDPDGEERCVACHLCSAACPVDCISMQAA and AWFRINFSRCIFCGLCTEACPTLALQMTSE. Residues Cys-57, Cys-60, Cys-63, Cys-67, Cys-96, Cys-99, Cys-102, and Cys-106 each contribute to the [4Fe-4S] cluster site.

This sequence belongs to the complex I 23 kDa subunit family. In terms of assembly, NDH-1 is composed of 14 different subunits. Subunits NuoA, H, J, K, L, M, N constitute the membrane sector of the complex. It depends on [4Fe-4S] cluster as a cofactor.

It localises to the cell inner membrane. The catalysed reaction is a quinone + NADH + 5 H(+)(in) = a quinol + NAD(+) + 4 H(+)(out). Its function is as follows. NDH-1 shuttles electrons from NADH, via FMN and iron-sulfur (Fe-S) centers, to quinones in the respiratory chain. The immediate electron acceptor for the enzyme in this species is believed to be ubiquinone. Couples the redox reaction to proton translocation (for every two electrons transferred, four hydrogen ions are translocated across the cytoplasmic membrane), and thus conserves the redox energy in a proton gradient. The polypeptide is NADH-quinone oxidoreductase subunit I (Syntrophotalea carbinolica (strain DSM 2380 / NBRC 103641 / GraBd1) (Pelobacter carbinolicus)).